Here is a 229-residue protein sequence, read N- to C-terminus: Ribonuclease 3 (229 aa).

One can recognise an RNase III domain in the interval 5 to 136 (LAELERALGI…VIGAIYLDQG (132 aa)). Glutamate 49 lines the Mg(2+) pocket. The active site involves aspartate 53. Residues aspartate 122 and glutamate 125 each coordinate Mg(2+). Residue glutamate 125 is part of the active site. Residues 161–229 (DPTTRLQEIV…AQAALADIDR (69 aa)) enclose the DRBM domain.

The protein belongs to the ribonuclease III family. Homodimer. Mg(2+) is required as a cofactor.

Its subcellular location is the cytoplasm. It catalyses the reaction Endonucleolytic cleavage to 5'-phosphomonoester.. In terms of biological role, digests double-stranded RNA. Involved in the processing of primary rRNA transcript to yield the immediate precursors to the large and small rRNAs (23S and 16S). Processes some mRNAs, and tRNAs when they are encoded in the rRNA operon. Processes pre-crRNA and tracrRNA of type II CRISPR loci if present in the organism. This chain is Ribonuclease 3, found in Chloroflexus aggregans (strain MD-66 / DSM 9485).